The following is a 919-amino-acid chain: Probable disease resistance protein At4g27220 (919 aa).

2 coiled-coil regions span residues 1-30 (MFRS…LKRS) and 74-95 (VEIL…KKIS). The NB-ARC domain maps to 121–399 (MLDKLKDCLK…AEGLLDGQHH (279 aa)). 141–148 (GMGGVGKT) is a binding site for ATP. LRR repeat units follow at residues 447–468 (GEGF…QDKF), 469–492 (VSSV…VIEG), 494–516 (ETLV…FLQA), 519–540 (NLRI…FSNL), 542–564 (SLRS…ESLV), 565–587 (KLQF…EALS), 588–610 (SLRY…TILQ), and 611–635 (LSSL…EREG).

Belongs to the disease resistance NB-LRR family.

Functionally, probable disease resistance protein. The polypeptide is Probable disease resistance protein At4g27220 (Arabidopsis thaliana (Mouse-ear cress)).